The following is a 320-amino-acid chain: Protein EI24 homolog (320 aa).

The next 3 membrane-spanning stretches (helical) occupy residues Gln41 to Ile61, Gly94 to Leu114, and Ile175 to Gly195. Asn217 carries an N-linked (GlcNAc...) asparagine glycan. Transmembrane regions (helical) follow at residues Leu227–Ala247, Ile248–Val268, and Leu292–Phe312.

The protein belongs to the EI24 (TC 9.B.7) family.

It is found in the membrane. The protein is Protein EI24 homolog of Arabidopsis thaliana (Mouse-ear cress).